A 391-amino-acid polypeptide reads, in one-letter code: MAEELKPELWTTSSNSALKLSLVNDENAVQFSPIFTYPIFGQAEQLFGYQDLNILLAFDSVTFKPFLNIKYTKKLERGLDDVEGSILKFLPEGDVILKDEVEWVDAFNGEREKFALPNSESKVAEYTSGGESFAIFKVHLSDPNIRQLHRRMQIFTLLFIEAASYIDEDDSAWDIFMTFNTSTRQCIGYTTTYKHWRYINGQEFDSSEKTTKRAKISQFIIFPPYQSKSHGSHLYSAAIDVWSKEEKISEVTVEDPNEAFDDLRDRCDFMRLSGSGLSSSIPEDVPIPRTWLTEQARKYKLSLVQFTRLVEMILLYDNSPNFEIQVKARLYQKNHEVLTGMDSDTRKAKLQEAFTSLKEDYARILQKVPNRRRVLPSDEENAGESKRHKKE.

An interaction with histone H4 N-terminus region spans residues 193–195 (YKH). Acetyl-CoA-binding positions include 219–221 (FII) and 226–232 (QSKSHGS). Catalysis depends on Glu-254, which acts as the Proton donor/acceptor. The tract at residues 372-391 (RRVLPSDEENAGESKRHKKE) is disordered.

The protein belongs to the HAT1 family. In terms of assembly, component of the HAT-B complex composed of at least HAT1 and HAT2. The HAT-B complex binds to histone H4 tail.

The protein localises to the cytoplasm. The protein resides in the nucleus. It carries out the reaction L-lysyl-[protein] + acetyl-CoA = N(6)-acetyl-L-lysyl-[protein] + CoA + H(+). Its function is as follows. Catalytic component of the histone acetylase B (HAT-B) complex. Acetylates 'Lys-12' of histone H4 which is required for telomeric silencing. Has intrinsic substrate specificity that modifies lysine in recognition sequence GXGKXG. Involved in DNA double-strand break repair. In Eremothecium gossypii (strain ATCC 10895 / CBS 109.51 / FGSC 9923 / NRRL Y-1056) (Yeast), this protein is Histone acetyltransferase type B catalytic subunit (HAT1).